Here is a 397-residue protein sequence, read N- to C-terminus: Tryptophan synthase beta chain (397 aa).

Position 87 is an N6-(pyridoxal phosphate)lysine (lysine 87).

It belongs to the TrpB family. Tetramer of two alpha and two beta chains. Pyridoxal 5'-phosphate is required as a cofactor.

The enzyme catalyses (1S,2R)-1-C-(indol-3-yl)glycerol 3-phosphate + L-serine = D-glyceraldehyde 3-phosphate + L-tryptophan + H2O. It participates in amino-acid biosynthesis; L-tryptophan biosynthesis; L-tryptophan from chorismate: step 5/5. The beta subunit is responsible for the synthesis of L-tryptophan from indole and L-serine. In Salmonella arizonae (strain ATCC BAA-731 / CDC346-86 / RSK2980), this protein is Tryptophan synthase beta chain.